The chain runs to 300 residues: Protoheme IX farnesyltransferase (300 aa).

9 helical membrane passes run 28–48 (VVAL…PTIL), 50–70 (VQPL…AAAL), 100–120 (ALIF…VFTN), 122–142 (LTAW…TAYL), 149–169 (NIVI…TAVT), 176–196 (ALLL…ALAI), 222–242 (CILL…LVGM), 243–263 (SGPL…YKAW), and 280–300 (FSIY…YLWA).

It belongs to the UbiA prenyltransferase family. Protoheme IX farnesyltransferase subfamily.

The protein localises to the cell inner membrane. The catalysed reaction is heme b + (2E,6E)-farnesyl diphosphate + H2O = Fe(II)-heme o + diphosphate. It participates in porphyrin-containing compound metabolism; heme O biosynthesis; heme O from protoheme: step 1/1. Converts heme B (protoheme IX) to heme O by substitution of the vinyl group on carbon 2 of heme B porphyrin ring with a hydroxyethyl farnesyl side group. The chain is Protoheme IX farnesyltransferase from Shewanella oneidensis (strain ATCC 700550 / JCM 31522 / CIP 106686 / LMG 19005 / NCIMB 14063 / MR-1).